We begin with the raw amino-acid sequence, 253 residues long: Probable transcriptional regulatory protein Hore_12350 (253 aa).

The disordered stretch occupies residues 1-21; sequence MAGHSKWANIKHKKAKEDRKR.

This sequence belongs to the TACO1 family.

Its subcellular location is the cytoplasm. The polypeptide is Probable transcriptional regulatory protein Hore_12350 (Halothermothrix orenii (strain H 168 / OCM 544 / DSM 9562)).